The following is a 118-amino-acid chain: uncharacterized protein (118 aa).

The N-terminal stretch at 1–18 is a signal peptide; sequence MSKLIFLFVVATLATIKA. Asparagine 24 is a glycosylation site (N-linked (GlcNAc...) asparagine; by host).

This is an uncharacterized protein from Magallana gigas (Pacific oyster).